Consider the following 425-residue polypeptide: Glutamyl-tRNA reductase (425 aa).

Substrate-binding positions include 49-52, Ser-106, 111-113, and Gln-117; these read TCNR and EPQ. The active-site Nucleophile is the Cys-50. An NADP(+)-binding site is contributed by 186-191; the sequence is GAGETI.

Belongs to the glutamyl-tRNA reductase family. In terms of assembly, homodimer.

The enzyme catalyses (S)-4-amino-5-oxopentanoate + tRNA(Glu) + NADP(+) = L-glutamyl-tRNA(Glu) + NADPH + H(+). It functions in the pathway porphyrin-containing compound metabolism; protoporphyrin-IX biosynthesis; 5-aminolevulinate from L-glutamyl-tRNA(Glu): step 1/2. Its function is as follows. Catalyzes the NADPH-dependent reduction of glutamyl-tRNA(Glu) to glutamate 1-semialdehyde (GSA). This Saccharophagus degradans (strain 2-40 / ATCC 43961 / DSM 17024) protein is Glutamyl-tRNA reductase.